The following is a 479-amino-acid chain: Glycogen synthase (479 aa).

Lysine 15 contacts ADP-alpha-D-glucose.

This sequence belongs to the glycosyltransferase 1 family. Bacterial/plant glycogen synthase subfamily.

It catalyses the reaction [(1-&gt;4)-alpha-D-glucosyl](n) + ADP-alpha-D-glucose = [(1-&gt;4)-alpha-D-glucosyl](n+1) + ADP + H(+). Its pathway is glycan biosynthesis; glycogen biosynthesis. In terms of biological role, synthesizes alpha-1,4-glucan chains using ADP-glucose. The chain is Glycogen synthase from Roseobacter denitrificans (strain ATCC 33942 / OCh 114) (Erythrobacter sp. (strain OCh 114)).